Here is a 250-residue protein sequence, read N- to C-terminus: Isoprenyl transferase (250 aa).

Residue Asp26 is part of the active site. Asp26 serves as a coordination point for Mg(2+). Substrate is bound by residues 27-30 (GNGR), Trp31, Arg39, His43, and 71-73 (STE). The Proton acceptor role is filled by Asn74. Residues Trp75, Arg77, Arg198, and 204–206 (RLS) each bind substrate. Glu217 provides a ligand contact to Mg(2+).

Belongs to the UPP synthase family. In terms of assembly, homodimer. Requires Mg(2+) as cofactor.

In terms of biological role, catalyzes the condensation of isopentenyl diphosphate (IPP) with allylic pyrophosphates generating different type of terpenoids. In Streptococcus agalactiae serotype V (strain ATCC BAA-611 / 2603 V/R), this protein is Isoprenyl transferase.